The chain runs to 94 residues: Protein RESPONSE TO LOW SULFUR 1 (94 aa).

Positions 8-35 (VTVAAEEMDELRRRNIELSREVAEMKTE) form a coiled coil.

This chain is Protein RESPONSE TO LOW SULFUR 1, found in Arabidopsis thaliana (Mouse-ear cress).